We begin with the raw amino-acid sequence, 413 residues long: Divalent metal cation transporter MntH (413 aa).

The Cytoplasmic portion of the chain corresponds to 1–19; sequence MTDNRVENSSGRAARKLRL. A helical membrane pass occupies residues 20-39; it reads ALMGPAFIAAIGYIDPGNFA. The Periplasmic portion of the chain corresponds to 40–51; the sequence is TNIQAGASFGYQ. A helical transmembrane segment spans residues 52–71; the sequence is LLWVVVWANLMAMLIQILSA. At 72–95 the chain is on the cytoplasmic side; sequence KLGIATGKNLAEQIRDHYPRPVVW. Residues 96–118 traverse the membrane as a helical segment; that stretch reads FYWVQAEIIAMATDLAEFIGAAI. The Periplasmic segment spans residues 119 to 125; it reads GFKLILG. A helical membrane pass occupies residues 126–145; it reads VSLLQGAVLTGIATFLILML. The Cytoplasmic portion of the chain corresponds to 146 to 155; the sequence is QRRGQKPLEK. Residues 156–175 form a helical membrane-spanning segment; it reads VIGGLLLFVAAAYIVELFFS. Over 176 to 196 the chain is Periplasmic; the sequence is QPDMAQLGKGMVIPALPNPEA. A helical membrane pass occupies residues 197-220; it reads VFLAAGVLGATIMPHVIYLHSSLT. Topologically, residues 221 to 238 are cytoplasmic; sequence QHLHGGTRQQRYSATKWD. A helical transmembrane segment spans residues 239–258; the sequence is VAIAMTIAGFVNLAMMATAA. The Periplasmic segment spans residues 259–276; that stretch reads AAFHFSGHTGIADLDQAY. A helical transmembrane segment spans residues 277–297; the sequence is LTLEPLLSHAAATVFGLSLVA. Topologically, residues 298 to 327 are cytoplasmic; it reads AGLSSTVVGTLAGQVVMQGFVRFHIPLWVR. Residues 328 to 344 traverse the membrane as a helical segment; that stretch reads RTITMLPSFIVILMGLD. Residues 345 to 350 are Periplasmic-facing; that stretch reads PTRILV. A helical transmembrane segment spans residues 351–370; the sequence is MSQVLLSFGIALALVPLLIF. At 371–387 the chain is on the cytoplasmic side; that stretch reads TSNATLMGELVNTRRVK. A helical transmembrane segment spans residues 388 to 406; that stretch reads QVGWIIVVLVVALNIWLLV. At 407–413 the chain is on the periplasmic side; the sequence is GTVMGLS.

This sequence belongs to the NRAMP family.

It is found in the cell inner membrane. Its function is as follows. H(+)-stimulated, divalent metal cation uptake system. This Salmonella paratyphi C (strain RKS4594) protein is Divalent metal cation transporter MntH.